The primary structure comprises 128 residues: CD59 glycoprotein (128 aa).

The first 25 residues, 1–25 (MGIQGGSVLFGLLLVLAVFCHSGHS), serve as a signal peptide directing secretion. The region spanning 26–108 (LQCYNCPNPT…QLENGGTSLS (83 aa)) is the UPAR/Ly6 domain. Cystine bridges form between C28/C51, C31/C38, C44/C64, C70/C88, and C89/C94. N43 carries N-linked (GlcNAc...) asparagine glycosylation. N102 carries GPI-anchor amidated asparagine lipidation. A propeptide spans 103–128 (GGTSLSEKTVVLLVTLLLAAAWCLHP) (removed in mature form).

As to quaternary structure, interacts with T-cell surface antigen CD2. In terms of processing, N- and O-glycosylated.

Its subcellular location is the cell membrane. It is found in the secreted. In terms of biological role, potent inhibitor of the complement membrane attack complex (MAC) action, which protects self-cells from damage during complement activation. Acts by binding to the beta-haipins of C8 (C8A and C8B) components of the assembling MAC, forming an intermolecular beta-sheet that prevents incorporation of the multiple copies of C9 required for complete formation of the osmolytic pore. This chain is CD59 glycoprotein, found in Chlorocebus aethiops (Green monkey).